The following is an 83-amino-acid chain: Conotoxin MiEr92 (83 aa).

Residues 1-22 (MKLTCVLIVIMLFLTVCPLITA) form the signal peptide. The propeptide occupies 23–49 (DHSRDKQEHPAMRLKDRIRYLRRGKLT). Disulfide bonds link C52-C67, C59-C72, and C66-C81.

It belongs to the conotoxin O1 superfamily. Expressed by the venom duct.

It localises to the secreted. This chain is Conotoxin MiEr92, found in Conus miles (Soldier cone).